We begin with the raw amino-acid sequence, 83 residues long: Short neurotoxin VAN-10 (83 aa).

The first 21 residues, 1–21 (MKTLLLTLVVVTIVCLDLGYT), serve as a signal peptide directing secretion. Cystine bridges form between cysteine 24-cysteine 45, cysteine 38-cysteine 62, cysteine 64-cysteine 75, and cysteine 76-cysteine 81.

This sequence belongs to the three-finger toxin family. Short-chain subfamily. Type I alpha-neurotoxin sub-subfamily. As to expression, expressed by the venom gland.

Its subcellular location is the secreted. In terms of biological role, binds to muscle nicotinic acetylcholine receptor (nAChR) and inhibit acetylcholine from binding to the receptor, thereby impairing neuromuscular transmission. This is Short neurotoxin VAN-10 from Laticauda laticaudata (Blue-ringed sea krait).